The sequence spans 61 residues: Adipokinetic prohormone type 2 (61 aa).

The N-terminal stretch at 1–22 is a signal peptide; the sequence is MTQSCTLTLVLVVAVLAALATA. The residue at position 23 (Gln23) is a Pyrrolidone carboxylic acid. Residue Trp30 is modified to Tryptophan amide.

It belongs to the AKH/HRTH/RPCH family. Adipokinetic hormone precursor-related peptide (APRP) can form three type of disulfide-bond dimers: p1 (alpha-alpha), p2 (alpha-beta), and p3 (beta-beta).

Its subcellular location is the secreted. Functionally, this hormone, released from cells in the corpora cardiaca, causes release of diglycerides from the fat body and stimulation of muscles to use these diglycerides as an energy source during energy-demanding processes. The sequence is that of Adipokinetic prohormone type 2 from Locusta migratoria (Migratory locust).